We begin with the raw amino-acid sequence, 230 residues long: MFRGKKYQESSKLIDRLKLYEPSEALELAQKTAKAKFDETIEVHIKLGVDSRHADQQVRGAVVLPHGTGKKVRVLVFAKGDKAKEAEQAGADFVGGEELISKIQNENWFDYDVVVATPDMMGVVGRLGKVLGPKGLMPNPKAGTVSMDVAKAIADIKAGKIEYRLDKTNIIHCPIGKASFGNEKLMDNFRTLLGAIIKAKPAAAKGQYLKSVVVTSTMGPGIKINPLRVE.

Belongs to the universal ribosomal protein uL1 family. In terms of assembly, part of the 50S ribosomal subunit.

Its function is as follows. Binds directly to 23S rRNA. The L1 stalk is quite mobile in the ribosome, and is involved in E site tRNA release. Functionally, protein L1 is also a translational repressor protein, it controls the translation of the L11 operon by binding to its mRNA. The polypeptide is Large ribosomal subunit protein uL1 (Ruminiclostridium cellulolyticum (strain ATCC 35319 / DSM 5812 / JCM 6584 / H10) (Clostridium cellulolyticum)).